A 216-amino-acid chain; its full sequence is UPF0548 protein (216 aa).

This sequence belongs to the UPF0548 family.

In Dictyostelium discoideum (Social amoeba), this protein is UPF0548 protein.